A 310-amino-acid chain; its full sequence is Porphobilinogen deaminase (310 aa).

An S-(dipyrrolylmethanemethyl)cysteine modification is found at C242.

This sequence belongs to the HMBS family. As to quaternary structure, monomer. Dipyrromethane is required as a cofactor.

The enzyme catalyses 4 porphobilinogen + H2O = hydroxymethylbilane + 4 NH4(+). It participates in porphyrin-containing compound metabolism; protoporphyrin-IX biosynthesis; coproporphyrinogen-III from 5-aminolevulinate: step 2/4. Tetrapolymerization of the monopyrrole PBG into the hydroxymethylbilane pre-uroporphyrinogen in several discrete steps. In Halorhodospira halophila (strain DSM 244 / SL1) (Ectothiorhodospira halophila (strain DSM 244 / SL1)), this protein is Porphobilinogen deaminase.